The primary structure comprises 515 residues: Histone-lysine N-methyltransferase SET5 (515 aa).

One can recognise an SET domain in the interval 114–386 (SKVEIRECEE…KDEELVTTYV (273 aa)). Polar residues predominate over residues 452-462 (ALQRSNGGSSS). The interval 452 to 476 (ALQRSNGGSSSDLRRKSSIRNRKPD) is disordered.

Belongs to the class V-like SAM-binding methyltransferase superfamily. Histone-lysine methyltransferase family. SET5 subfamily.

The protein localises to the nucleus. It is found in the chromosome. It localises to the cytoplasm. It carries out the reaction L-lysyl-[histone] + S-adenosyl-L-methionine = N(6)-methyl-L-lysyl-[histone] + S-adenosyl-L-homocysteine + H(+). Functionally, histone methyltransferase that monomethylates 'Lys-5', 'Lys-8' and 'Lys-12' of histone H4 (H4K5me1, H4K8me1 and H4K12me1, respectively), thereby controlling gene expression and remodeling chromatin structures. The polypeptide is Histone-lysine N-methyltransferase SET5 (SET5) (Candida glabrata (strain ATCC 2001 / BCRC 20586 / JCM 3761 / NBRC 0622 / NRRL Y-65 / CBS 138) (Yeast)).